Reading from the N-terminus, the 506-residue chain is DEAD-box ATP-dependent RNA helicase CshA (506 aa).

A Q motif motif is present at residues 2 to 30; it reads QNFKELGISDNTVQSLESMGFKEPTPIQK. One can recognise a Helicase ATP-binding domain in the interval 33 to 203; it reads IPYALQGIDI…QQFMKSPKII (171 aa). 46-53 serves as a coordination point for ATP; sequence AQTGTGKT. A DEAD box motif is present at residues 150 to 153; that stretch reads DEAD. Residues 214–375 form the Helicase C-terminal domain; that stretch reads QIEEFYTIVK…LRPPHRKEVL (162 aa). A disordered region spans residues 436-506; sequence EKPLSRKGRN…KGRTFADHQK (71 aa). Residues 468 to 480 are compositionally biased toward basic residues; it reads KRSKGYSSKKKST.

The protein belongs to the DEAD box helicase family. CshA subfamily. As to quaternary structure, oligomerizes, may be a member of the RNA degradosome.

It localises to the cytoplasm. It carries out the reaction ATP + H2O = ADP + phosphate + H(+). DEAD-box RNA helicase possibly involved in RNA degradation. Unwinds dsRNA in both 5'- and 3'-directions, has RNA-dependent ATPase activity. The polypeptide is DEAD-box ATP-dependent RNA helicase CshA (Staphylococcus aureus (strain bovine RF122 / ET3-1)).